The following is an 88-amino-acid chain: DNA-directed RNA polymerase subunit omega (88 aa).

This sequence belongs to the RNA polymerase subunit omega family. In terms of assembly, the RNAP catalytic core consists of 2 alpha, 1 beta, 1 beta' and 1 omega subunit. When a sigma factor is associated with the core the holoenzyme is formed, which can initiate transcription.

The enzyme catalyses RNA(n) + a ribonucleoside 5'-triphosphate = RNA(n+1) + diphosphate. Its function is as follows. Promotes RNA polymerase assembly. Latches the N- and C-terminal regions of the beta' subunit thereby facilitating its interaction with the beta and alpha subunits. This Anaeromyxobacter sp. (strain Fw109-5) protein is DNA-directed RNA polymerase subunit omega.